The following is a 186-amino-acid chain: Lipid A acyltransferase PagP (186 aa).

Residues 1-25 (MNVSKYVAIFSFVFIQLISVGKVFA) form the signal peptide. Residues histidine 58, aspartate 101, and serine 102 contribute to the active site.

The protein belongs to the lipid A palmitoyltransferase family. As to quaternary structure, homodimer.

It localises to the cell outer membrane. The catalysed reaction is a lipid A + a 1,2-diacyl-sn-glycero-3-phosphocholine = a hepta-acyl lipid A + a 2-acyl-sn-glycero-3-phosphocholine. The enzyme catalyses a lipid IVA + a 1,2-diacyl-sn-glycero-3-phosphocholine = a lipid IVB + a 2-acyl-sn-glycero-3-phosphocholine. It catalyses the reaction a lipid IIA + a 1,2-diacyl-sn-glycero-3-phosphocholine = a lipid IIB + a 2-acyl-sn-glycero-3-phosphocholine. Its function is as follows. Transfers a fatty acid residue from the sn-1 position of a phospholipid to the N-linked hydroxyfatty acid chain on the proximal unit of lipid A or its precursors. The polypeptide is Lipid A acyltransferase PagP (Shigella boydii serotype 4 (strain Sb227)).